A 255-amino-acid chain; its full sequence is 3-oxo-5-alpha-steroid 4-dehydrogenase 1 (255 aa).

The next 5 membrane-spanning stretches (helical) occupy residues 6 to 26 (LCLL…AFVG), 82 to 102 (VLLA…PVLI), 107 to 127 (PTLL…GYLQ), 142 to 162 (VTHP…VINI), and 205 to 225 (FALA…LCAL).

The protein belongs to the steroid 5-alpha reductase family.

It is found in the microsome membrane. The protein resides in the endoplasmic reticulum membrane. It carries out the reaction a 3-oxo-5alpha-steroid + NADP(+) = a 3-oxo-Delta(4)-steroid + NADPH + H(+). It catalyses the reaction 5alpha-pregnane-3,20-dione + NADP(+) = progesterone + NADPH + H(+). The catalysed reaction is 17beta-hydroxy-5alpha-androstan-3-one + NADP(+) = testosterone + NADPH + H(+). The enzyme catalyses androst-4-ene-3,17-dione + NADPH + H(+) = 5alpha-androstan-3,17-dione + NADP(+). Its function is as follows. Converts testosterone into 5-alpha-dihydrotestosterone and progesterone or corticosterone into their corresponding 5-alpha-3-oxosteroids. It plays a central role in sexual differentiation and androgen physiology. The polypeptide is 3-oxo-5-alpha-steroid 4-dehydrogenase 1 (Mus musculus (Mouse)).